A 458-amino-acid chain; its full sequence is Argininosuccinate lyase (458 aa).

Belongs to the lyase 1 family. Argininosuccinate lyase subfamily.

The protein resides in the cytoplasm. It catalyses the reaction 2-(N(omega)-L-arginino)succinate = fumarate + L-arginine. It functions in the pathway amino-acid biosynthesis; L-arginine biosynthesis; L-arginine from L-ornithine and carbamoyl phosphate: step 3/3. The chain is Argininosuccinate lyase from Trichlorobacter lovleyi (strain ATCC BAA-1151 / DSM 17278 / SZ) (Geobacter lovleyi).